Consider the following 373-residue polypeptide: S-adenosylmethionine:tRNA ribosyltransferase-isomerase (373 aa).

This sequence belongs to the QueA family. Monomer.

The protein resides in the cytoplasm. It carries out the reaction 7-aminomethyl-7-carbaguanosine(34) in tRNA + S-adenosyl-L-methionine = epoxyqueuosine(34) in tRNA + adenine + L-methionine + 2 H(+). Its pathway is tRNA modification; tRNA-queuosine biosynthesis. In terms of biological role, transfers and isomerizes the ribose moiety from AdoMet to the 7-aminomethyl group of 7-deazaguanine (preQ1-tRNA) to give epoxyqueuosine (oQ-tRNA). This Prochlorococcus marinus (strain MIT 9515) protein is S-adenosylmethionine:tRNA ribosyltransferase-isomerase.